The sequence spans 312 residues: Dihydroorotate dehydrogenase B (NAD(+)), catalytic subunit (312 aa).

Residues Ser21 and 45 to 46 contribute to the FMN site; that span reads KA. Substrate is bound by residues Lys45 and 69 to 73; that span reads NAIGL. The FMN site is built by Asn99 and Asn127. Asn127 serves as a coordination point for substrate. Cys130 acts as the Nucleophile in catalysis. Lys165 and Ile191 together coordinate FMN. Residue 192-193 coordinates substrate; the sequence is NT. FMN-binding positions include Gly217, 243–244, and 265–266; these read GG and GT.

It belongs to the dihydroorotate dehydrogenase family. Type 1 subfamily. In terms of assembly, heterotetramer of 2 PyrK and 2 PyrD type B subunits. FMN is required as a cofactor.

The protein localises to the cytoplasm. It catalyses the reaction (S)-dihydroorotate + NAD(+) = orotate + NADH + H(+). Its pathway is pyrimidine metabolism; UMP biosynthesis via de novo pathway; orotate from (S)-dihydroorotate (NAD(+) route): step 1/1. Catalyzes the conversion of dihydroorotate to orotate with NAD(+) as electron acceptor. This Anoxybacillus flavithermus (strain DSM 21510 / WK1) protein is Dihydroorotate dehydrogenase B (NAD(+)), catalytic subunit (pyrD).